Consider the following 349-residue polypeptide: Protein-glutamate methylesterase/protein-glutamine glutaminase (349 aa).

One can recognise a Response regulatory domain in the interval 5–122 (RVLSVDDSAL…REGMLAYNEM (118 aa)). The residue at position 56 (Asp56) is a 4-aspartylphosphate. The CheB-type methylesterase domain maps to 152–344 (LLSSEKLIAI…QQMLAKISAG (193 aa)). Catalysis depends on residues Ser164, His190, and Asp286.

The protein belongs to the CheB family. Interacts with CheA. Binds to a C-terminal pentapeptide sequence carried by certain receptors. Phosphorylated by CheA. Phosphorylation of the N-terminal regulatory domain activates the methylesterase activity.

Its subcellular location is the cytoplasm. The enzyme catalyses [protein]-L-glutamate 5-O-methyl ester + H2O = L-glutamyl-[protein] + methanol + H(+). The catalysed reaction is L-glutaminyl-[protein] + H2O = L-glutamyl-[protein] + NH4(+). Methylesterase activity is activated via phosphorylation in response to negative chemotactic stimuli and is inhibited in the presence of attractants. Activation requires both CheA and CheW. Functionally, involved in chemotaxis. Part of a chemotaxis signal transduction system that modulates chemotaxis in response to various stimuli. Catalyzes the demethylation of specific methylglutamate residues introduced into the chemoreceptors (methyl-accepting chemotaxis proteins or MCP) by CheR. Also mediates the irreversible deamidation of specific glutamine residues to glutamic acid. Catalyzes its own deactivation by removing the activating phosphoryl group. The protein is Protein-glutamate methylesterase/protein-glutamine glutaminase of Escherichia coli (strain K12).